The chain runs to 720 residues: Nucleoporin NUP2 (720 aa).

The disordered stretch occupies residues 1–33; that stretch reads MAKRVADAQIQRETYDSNESDDDVTPSTKVASS. 2 positions are modified to phosphoserine: Ser-17 and Ser-20. Residues 35 to 50 form an interaction with SRP1 NLS binding site 1 region; sequence VMNRRKIAMPKRRMAF. 2 disordered regions span residues 52-92 and 136-278; these read PFGS…SNSR and KSIE…VDNN. Residues 67-69 form an FXF 1 repeat; sequence FSF. The span at 81-92 shows a compositional bias: polar residues; sequence VDNSPTTESNSR. Ser-137 is subject to Phosphoserine. Residues 147-159 show a composition bias toward basic and acidic residues; the sequence is NDAKPAKVEDVQK. Phosphoserine is present on Ser-165. An FXFG 1 repeat occupies 189 to 192; the sequence is FSFG. The span at 193 to 202 shows a compositional bias: basic and acidic residues; the sequence is PKKENRKKDE. 2 positions are modified to phosphoserine: Ser-203 and Ser-205. FXF repeat units lie at residues 216–218 and 247–249; these read FKF and FSF. A compositionally biased stretch (polar residues) spans 243–278; sequence NAKPFSFSSATSTTEQTKSKNPLSLTEATKTNVDNN. 3 FXFG repeats span residues 285 to 288, 302 to 305, and 318 to 321; these read FTFG and FVFG. Over residues 315-324 the composition is skewed to polar residues; it reads KSSFTFGSTT. The tract at residues 315 to 604 is disordered; it reads KSSFTFGSTT…KPINLQNGEE (290 aa). Residues 345-360 show a composition bias toward low complexity; that stretch reads SNDSNPSFSFSIPSKN. Ser-348 and Ser-351 each carry phosphoserine. The stretch at 352-354 is one FXF 4 repeat; the sequence is FSF. Phosphothreonine is present on Thr-361. An FXFG 5 repeat occupies 369 to 372; that stretch reads FSFG. Positions 373–384 are enriched in polar residues; it reads VPNSSKNETSKP. One copy of the FXFG 6 repeat lies at 386–389; the sequence is FSFG. The span at 424–435 shows a compositional bias: basic and acidic residues; the sequence is TEKEKESKKDSK. FXFG repeat units follow at residues 438 to 441, 474 to 477, 493 to 496, 511 to 514, and 524 to 527; these read FSFG and FTFG. The span at 479–495 shows a compositional bias: low complexity; the sequence is NTNTTKTADTKAPTFTF. Positions 513–533 are enriched in polar residues; it reads FGTSQPNNTPSFSFGKTTANL. The segment covering 534-548 has biased composition (low complexity); sequence PANSSTSPAPSIPST. The FXF 5 repeat unit spans residues 550-552; that stretch reads FKF. The segment covering 574-584 has biased composition (polar residues); it reads TEATGNESQDA. At Ser-581 the chain carries Phosphoserine. Residues 583–720 form the RanBD1 domain; sequence DATKVDATPE…AIEDAKKEMK (138 aa). Thr-590 carries the post-translational modification Phosphothreonine.

As to quaternary structure, component of the nuclear pore complex (NPC). NPC constitutes the exclusive means of nucleocytoplasmic transport. NPCs allow the passive diffusion of ions and small molecules and the active, nuclear transport receptor-mediated bidirectional transport of macromolecules such as proteins, RNAs, ribonucleoparticles (RNPs), and ribosomal subunits across the nuclear envelope. Due to its 8-fold rotational symmetry, all subunits are present with 8 copies or multiples thereof. Binds to the nuclear basket of the NPC through NUP60 in a (GSP1, GSP2) GTPase-GTP-dependent manner. Interacts through its FG repeats with nuclear transport factors. Interacts with KAP122.

It localises to the nucleus. It is found in the nuclear pore complex. The protein resides in the nucleus membrane. Its function is as follows. Functions as a component of the nuclear pore complex (NPC). NPC components, collectively referred to as nucleoporins (NUPs), can play the role of both NPC structural components and of docking or interaction partners for transiently associated nuclear transport factors. Active directional transport is assured by both, a Phe-Gly (FG) repeat affinity gradient for these transport factors across the NPC and a transport cofactor concentration gradient across the nuclear envelope (GSP1 and GSP2 GTPases associated predominantly with GTP in the nucleus, with GDP in the cytoplasm). As one of the FG repeat nucleoporins NUP2 is involved in interactions with and guidance of nuclear transport receptors such as SRP1-KAP95 (importin alpha and beta) through the NPC. Like the closely related NUP1 it also plays an important role in disassembling and recycling SRP1-KAP95 to the cytoplasm after nuclear import. Upon entry of the heterotrimeric SRP1-KAP95-cargo complex in the nucleus, NUP2 binds through its N-terminus to the SRP1 nuclear localization signal (NLS) binding site, thus accelerating the release of the NLS-cargo. SRP1 in turn is released from NUP2 by binding of the GSP1-GTP associated export factor CSE1. NUP2 may also have a chromatin boundary/insulator activity through indirect interaction with genomic DNA via CSE1 and blocking of heterochromatin spreading. The chain is Nucleoporin NUP2 (NUP2) from Saccharomyces cerevisiae (strain ATCC 204508 / S288c) (Baker's yeast).